Here is a 419-residue protein sequence, read N- to C-terminus: DNA primase DnaG (419 aa).

In terms of domain architecture, Toprim spans 168 to 244; it reads DTIIVVEGRS…KVDYVARAPE (77 aa). Residues Glu-174, Asp-218, and Asp-220 each coordinate Mg(2+). Composition is skewed to basic and acidic residues over residues 280–291 and 306–316; these read KPAEEAVKREEE and KAAKPPEEKPP. A disordered region spans residues 280–317; it reads KPAEEAVKREEEAAAEAKPPAPAVQEKAAKPPEEKPPT.

It belongs to the archaeal DnaG primase family. Forms a ternary complex with MCM helicase and DNA. Component of the archaeal exosome complex. It depends on Mg(2+) as a cofactor.

It catalyses the reaction ssDNA + n NTP = ssDNA/pppN(pN)n-1 hybrid + (n-1) diphosphate.. Its function is as follows. RNA polymerase that catalyzes the synthesis of short RNA molecules used as primers for DNA polymerase during DNA replication. Also part of the exosome, which is a complex involved in RNA degradation. Acts as a poly(A)-binding protein that enhances the interaction between heteromeric, adenine-rich transcripts and the exosome. The chain is DNA primase DnaG from Aeropyrum pernix (strain ATCC 700893 / DSM 11879 / JCM 9820 / NBRC 100138 / K1).